A 516-amino-acid chain; its full sequence is Probable D,D-dipeptide-binding periplasmic protein DdpA (516 aa).

The first 25 residues, 1 to 25, serve as a signal peptide directing secretion; the sequence is MKRSISFRPTLLALVLATNFPVAHA.

The protein belongs to the bacterial solute-binding protein 5 family. In terms of assembly, the complex is composed of two ATP-binding proteins (DdpD and DdpF), two transmembrane proteins (DdpB and DdpC) and a solute-binding protein (DdpA).

It is found in the periplasm. In terms of biological role, part of the ABC transporter complex DdpABCDF, which is probably involved in D,D-dipeptide transport. This is Probable D,D-dipeptide-binding periplasmic protein DdpA (ddpA) from Escherichia coli (strain K12).